We begin with the raw amino-acid sequence, 240 residues long: UDP-2,3-diacylglucosamine hydrolase (240 aa).

5 residues coordinate Mn(2+): aspartate 8, histidine 10, aspartate 41, asparagine 78, and histidine 113. Position 78–79 (78–79 (NR)) interacts with substrate. Residues aspartate 121, serine 159, asparagine 163, lysine 166, and histidine 194 each coordinate substrate. Residues histidine 194 and histidine 196 each contribute to the Mn(2+) site.

This sequence belongs to the LpxH family. Requires Mn(2+) as cofactor.

It is found in the cell inner membrane. The catalysed reaction is UDP-2-N,3-O-bis[(3R)-3-hydroxytetradecanoyl]-alpha-D-glucosamine + H2O = 2-N,3-O-bis[(3R)-3-hydroxytetradecanoyl]-alpha-D-glucosaminyl 1-phosphate + UMP + 2 H(+). Its pathway is glycolipid biosynthesis; lipid IV(A) biosynthesis; lipid IV(A) from (3R)-3-hydroxytetradecanoyl-[acyl-carrier-protein] and UDP-N-acetyl-alpha-D-glucosamine: step 4/6. In terms of biological role, hydrolyzes the pyrophosphate bond of UDP-2,3-diacylglucosamine to yield 2,3-diacylglucosamine 1-phosphate (lipid X) and UMP by catalyzing the attack of water at the alpha-P atom. Involved in the biosynthesis of lipid A, a phosphorylated glycolipid that anchors the lipopolysaccharide to the outer membrane of the cell. This chain is UDP-2,3-diacylglucosamine hydrolase, found in Shewanella baltica (strain OS155 / ATCC BAA-1091).